Reading from the N-terminus, the 338-residue chain is Fe-S cluster assembly protein DRE2 (338 aa).

The tract at residues 1-165 (MAKSGLLLIH…LPSFKKAANK (165 aa)) is N-terminal SAM-like domain. The tract at residues 166-232 (PLPTFKKKVE…DDLLNEEDAK (67 aa)) is linker. A disordered region spans residues 181-223 (VEARVHKAENDDDELEDEEDENLFDASRSKYFDEDDSESLDED). Composition is skewed to acidic residues over residues 190-203 (NDDD…DENL) and 213-223 (DEDDSESLDED). Cys-242, Cys-253, Cys-256, and Cys-258 together coordinate [2Fe-2S] cluster. The fe-S binding site A stretch occupies residues 242 to 258 (CGKSKTKKKKACKDCSC). 4 residues coordinate [4Fe-4S] cluster: Cys-301, Cys-304, Cys-312, and Cys-315. 2 short sequence motifs (cx2C motif) span residues 301–304 (CGSC) and 312–315 (CTGC). Residues 301–315 (CGSCSLGDAFRCTGC) form a fe-S binding site B region.

The protein belongs to the anamorsin family. Monomer. Interacts with TAH18. Interacts with MIA40. [2Fe-2S] cluster is required as a cofactor. [4Fe-4S] cluster serves as cofactor.

It localises to the cytoplasm. Its subcellular location is the mitochondrion intermembrane space. In terms of biological role, component of the cytosolic iron-sulfur (Fe-S) protein assembly (CIA) machinery required for the maturation of extramitochondrial Fe-S proteins. Part of an electron transfer chain functioning in an early step of cytosolic Fe-S biogenesis, facilitating the de novo assembly of a [4Fe-4S] cluster on the scaffold complex CFD1-NBP35. Electrons are transferred to DRE2 from NADPH via the FAD- and FMN-containing protein TAH18. TAH18-DRE2 are also required for the assembly of the diferric tyrosyl radical cofactor of ribonucleotide reductase (RNR), probably by providing electrons for reduction during radical cofactor maturation in the catalytic small subunit RNR2. This Candida glabrata (strain ATCC 2001 / BCRC 20586 / JCM 3761 / NBRC 0622 / NRRL Y-65 / CBS 138) (Yeast) protein is Fe-S cluster assembly protein DRE2.